A 361-amino-acid polypeptide reads, in one-letter code: GDP-mannose 4,6 dehydratase 1 (361 aa).

Residues glycine 23–aspartate 28, aspartate 79–leucine 80, leucine 101–serine 105, and tyrosine 116 each bind NADP(+). Serine 150 is a catalytic residue. Catalysis depends on nucleophile residues glutamate 152 and tyrosine 173. Lysine 177, histidine 203, and arginine 208 together coordinate NADP(+).

The protein belongs to the NAD(P)-dependent epimerase/dehydratase family. GDP-mannose 4,6-dehydratase subfamily. Homotetramer. Requires NADP(+) as cofactor. As to expression, expressed in roots,stipules and pollen just before anthesis. Primarily localized to the root meristem and columella root cap. Not expressed in emerging lateral roots.

The catalysed reaction is GDP-alpha-D-mannose = GDP-4-dehydro-alpha-D-rhamnose + H2O. The protein operates within nucleotide-sugar biosynthesis; GDP-L-fucose biosynthesis via de novo pathway; GDP-L-fucose from GDP-alpha-D-mannose: step 1/2. Its function is as follows. Catalyzes the conversion of GDP-D-mannose to GDP-4-dehydro-6-deoxy-D-mannose. The protein is GDP-mannose 4,6 dehydratase 1 (GMD1) of Arabidopsis thaliana (Mouse-ear cress).